The sequence spans 160 residues: Endoribonuclease YbeY (160 aa).

Positions 112, 116, and 122 each coordinate Zn(2+).

The protein belongs to the endoribonuclease YbeY family. Requires Zn(2+) as cofactor.

It is found in the cytoplasm. In terms of biological role, single strand-specific metallo-endoribonuclease involved in late-stage 70S ribosome quality control and in maturation of the 3' terminus of the 16S rRNA. The sequence is that of Endoribonuclease YbeY from Maricaulis maris (strain MCS10) (Caulobacter maris).